A 494-amino-acid polypeptide reads, in one-letter code: Ribonuclease H (494 aa).

2 disordered regions span residues 79–148 (NRRR…APPP) and 205–231 (RSGL…VGLR). Polar residues-rich tracts occupy residues 84 to 100 (GSTS…NQLA) and 131 to 143 (PTTS…TRTS). In terms of domain architecture, RNase H type-1 spans 272-488 (SSVPQVVYVD…ADVLAVAGAR (217 aa)). Mg(2+) is bound by residues Asp281, Glu325, Asp374, and Asp480.

The protein belongs to the RNase H family. In terms of assembly, monomer. Mg(2+) is required as a cofactor.

It carries out the reaction Endonucleolytic cleavage to 5'-phosphomonoester.. Endonuclease that specifically degrades the RNA of RNA-DNA hybrids. In Crithidia fasciculata, this protein is Ribonuclease H (RNH1).